A 185-amino-acid polypeptide reads, in one-letter code: Elongation factor P (185 aa).

This sequence belongs to the elongation factor P family.

The protein localises to the cytoplasm. It participates in protein biosynthesis; polypeptide chain elongation. Its function is as follows. Involved in peptide bond synthesis. Stimulates efficient translation and peptide-bond synthesis on native or reconstituted 70S ribosomes in vitro. Probably functions indirectly by altering the affinity of the ribosome for aminoacyl-tRNA, thus increasing their reactivity as acceptors for peptidyl transferase. The protein is Elongation factor P of Clostridium tetani (strain Massachusetts / E88).